The following is a 454-amino-acid chain: Mitochondrial distribution and morphology protein 10 (454 aa).

The protein belongs to the MDM10 family. As to quaternary structure, component of the ER-mitochondria encounter structure (ERMES) or MDM complex, composed of MMM1, MDM10, MDM12 and MDM34. Associates with the mitochondrial outer membrane sorting assembly machinery SAM(core) complex.

The protein localises to the mitochondrion outer membrane. Its function is as follows. Component of the ERMES/MDM complex, which serves as a molecular tether to connect the endoplasmic reticulum and mitochondria. Components of this complex are involved in the control of mitochondrial shape and protein biogenesis and may function in phospholipid exchange. MDM10 is involved in the late assembly steps of the general translocase of the mitochondrial outer membrane (TOM complex). Functions in the TOM40-specific route of the assembly of outer membrane beta-barrel proteins, including the association of TOM40 with the receptor TOM22 and small TOM proteins. Can associate with the SAM(core) complex as well as the MDM12-MMM1 complex, both involved in late steps of the major beta-barrel assembly pathway, that is responsible for biogenesis of all outer membrane beta-barrel proteins. May act as a switch that shuttles between both complexes and channels precursor proteins into the TOM40-specific pathway. Plays a role in mitochondrial morphology and in the inheritance of mitochondria. The protein is Mitochondrial distribution and morphology protein 10 of Candida tropicalis (strain ATCC MYA-3404 / T1) (Yeast).